We begin with the raw amino-acid sequence, 335 residues long: Leucine-rich repeat-containing protein 39 (335 aa).

The stretch at 10–47 forms a coiled coil; sequence AVNAVKEVWEKRIKKLNEDLKREKEFQHKLVRIWEERV. LRR repeat units lie at residues 84–105, 107–128, 130–151, 153–176, 177–197, 200–221, 223–244, 246–267, and 269–290; these read QLQE…IGRF, NLIV…IGLL, RLQE…LSNC, SLEK…SNLL, KLTH…AVLN, ALEW…IERM, NLHT…ISNM, NLGT…MEEM, and NLRF…PPSE.

In terms of assembly, interacts with MYH7 (via C-terminus). In terms of tissue distribution, highly expressed in skeletal muscle and heart. Not detected in other tissues tested.

It localises to the cytoplasm. The protein resides in the myofibril. The protein localises to the sarcomere. It is found in the m line. Component of the sarcomeric M-band which plays a role in myocyte response to biomechanical stress. May regulate expression of other M-band proteins via an SRF-dependent pathway. Important for normal contractile function in heart. The protein is Leucine-rich repeat-containing protein 39 (LRRC39) of Homo sapiens (Human).